The chain runs to 60 residues: Cytotoxin 2 (60 aa).

4 disulfides stabilise this stretch: Cys3/Cys21, Cys14/Cys38, Cys42/Cys53, and Cys54/Cys59.

Belongs to the three-finger toxin family. Short-chain subfamily. Type IA cytotoxin sub-subfamily. As to quaternary structure, monomer, or heterodimer with alpha-cobratoxin (AC P01391); disulfide-linked. In terms of tissue distribution, expressed by the venom gland.

The protein resides in the secreted. Its subcellular location is the target cell membrane. In terms of biological role, monomer: shows cytolytic activity. Heterodimer: has no cytolytic activity, but retains most of the alpha-cobratoxin capacity to compete with alpha-bungarotoxin for binding to Torpedo and alpha-7/CHRNA7 nicotinic acetylcholine receptors (nAChRs) as well as to Lymnea stagnalis acetylcholine-binding protein. This Naja kaouthia (Monocled cobra) protein is Cytotoxin 2.